Here is a 215-residue protein sequence, read N- to C-terminus: Deoxyribose-phosphate aldolase (215 aa).

Asp90 acts as the Proton donor/acceptor in catalysis. Catalysis depends on Lys152, which acts as the Schiff-base intermediate with acetaldehyde. Lys181 acts as the Proton donor/acceptor in catalysis.

Belongs to the DeoC/FbaB aldolase family. DeoC type 1 subfamily.

It localises to the cytoplasm. It carries out the reaction 2-deoxy-D-ribose 5-phosphate = D-glyceraldehyde 3-phosphate + acetaldehyde. It participates in carbohydrate degradation; 2-deoxy-D-ribose 1-phosphate degradation; D-glyceraldehyde 3-phosphate and acetaldehyde from 2-deoxy-alpha-D-ribose 1-phosphate: step 2/2. In terms of biological role, catalyzes a reversible aldol reaction between acetaldehyde and D-glyceraldehyde 3-phosphate to generate 2-deoxy-D-ribose 5-phosphate. This Ureaplasma urealyticum serovar 10 (strain ATCC 33699 / Western) protein is Deoxyribose-phosphate aldolase.